A 103-amino-acid polypeptide reads, in one-letter code: Large ribosomal subunit protein bL21 (103 aa).

Belongs to the bacterial ribosomal protein bL21 family. Part of the 50S ribosomal subunit. Contacts protein L20.

In terms of biological role, this protein binds to 23S rRNA in the presence of protein L20. The chain is Large ribosomal subunit protein bL21 from Serratia proteamaculans (strain 568).